The following is a 138-amino-acid chain: Transcription antitermination protein NusB (138 aa).

It belongs to the NusB family.

Functionally, involved in transcription antitermination. Required for transcription of ribosomal RNA (rRNA) genes. Binds specifically to the boxA antiterminator sequence of the ribosomal RNA (rrn) operons. This Helicobacter pylori (strain G27) protein is Transcription antitermination protein NusB.